The chain runs to 80 residues: Serine protease inhibitor Kazal-type 1 (80 aa).

Positions 1–23 (MKVAVIFLLSALALLSLAGNTFS) are cleaved as a signal peptide. A Kazal-like domain is found at 27–80 (TGKEASCHDAVAGCPRIYDPVCGTDGITYANECVLCFENRKRIEPVLIRKGGPC). 3 cysteine pairs are disulfide-bonded: C33/C62, C40/C59, and C48/C80.

In terms of tissue distribution, in the genital tract, expressed only in male accessory glands including seminal vesicle, coagulating gland and prostate.

The protein localises to the secreted. In terms of biological role, serine protease inhibitor which exhibits anti-trypsin activity. In the pancreas, protects against trypsin-catalyzed premature activation of zymogens. Functionally, in the male reproductive tract, binds to sperm heads where it modulates sperm capacitance by inhibiting calcium uptake and nitrogen oxide (NO) production. The protein is Serine protease inhibitor Kazal-type 1 of Mus musculus (Mouse).